A 54-amino-acid polypeptide reads, in one-letter code: Ribulose bisphosphate carboxylase large chain (54 aa).

Positions 1-2 (MS) are excised as a propeptide. Residue Pro-3 is modified to N-acetylproline. Lys-14 is modified (N6,N6,N6-trimethyllysine).

This sequence belongs to the RuBisCO large chain family. Type I subfamily. As to quaternary structure, heterohexadecamer of 8 large chains and 8 small chains.

It localises to the plastid. Its subcellular location is the chloroplast. The enzyme catalyses 2 (2R)-3-phosphoglycerate + 2 H(+) = D-ribulose 1,5-bisphosphate + CO2 + H2O. It catalyses the reaction D-ribulose 1,5-bisphosphate + O2 = 2-phosphoglycolate + (2R)-3-phosphoglycerate + 2 H(+). RuBisCO catalyzes two reactions: the carboxylation of D-ribulose 1,5-bisphosphate, the primary event in carbon dioxide fixation, as well as the oxidative fragmentation of the pentose substrate in the photorespiration process. Both reactions occur simultaneously and in competition at the same active site. The protein is Ribulose bisphosphate carboxylase large chain (rbcL) of Ilex aquifolium (English holly).